We begin with the raw amino-acid sequence, 797 residues long: Interphotoreceptor matrix proteoglycan 1 (797 aa).

Residues 1-20 (MYLETRRAIFVFWIFLQVQG) form the signal peptide. N-linked (GlcNAc...) asparagine glycosylation is found at Asn-42, Asn-143, Asn-191, and Asn-215. An SEA 1 domain is found at 232–354 (EEQRVELSVS…QPEIYLTATD (123 aa)). Thr-403, Thr-421, Thr-432, and Thr-442 each carry an O-linked (GalNAc...) threonine glycan. The region spanning 571–684 (RELVVFFSLR…YSLNIEPADQ (114 aa)) is the SEA 2 domain. 2 N-linked (GlcNAc...) asparagine glycosylation sites follow: Asn-592 and Asn-616. A Heparin- and hyaluronan-binding motif is present at residues 621-629 (KQLEILNFR). Residues Asn-630 and Asn-648 are each glycosylated (N-linked (GlcNAc...) asparagine).

The N-terminus is blocked. Post-translationally, highly glycosylated (N- and O-linked carbohydrates and sialic acid). As to expression, expressed in the retina (at protein level). In the retina, specifically expressed by cone and rod photoreceptor cells. Localizes to cone and rod photoreceptor cells surrounding the interphotoreceptor matrix of the retina.

It is found in the cell projection. It localises to the cilium. Its subcellular location is the photoreceptor outer segment. The protein resides in the secreted. The protein localises to the extracellular space. It is found in the extracellular matrix. It localises to the interphotoreceptor matrix. Its subcellular location is the photoreceptor inner segment. Its function is as follows. Chondroitin sulfate-, heparin- and hyaluronan-binding protein. May serve to form a basic macromolecular scaffold comprising the insoluble interphotoreceptor matrix. In Homo sapiens (Human), this protein is Interphotoreceptor matrix proteoglycan 1.